We begin with the raw amino-acid sequence, 100 residues long: Small ribosomal subunit protein uS14c (100 aa).

It belongs to the universal ribosomal protein uS14 family. As to quaternary structure, part of the 30S ribosomal subunit.

The protein resides in the plastid. It is found in the chloroplast. Its function is as follows. Binds 16S rRNA, required for the assembly of 30S particles. The protein is Small ribosomal subunit protein uS14c of Physcomitrium patens (Spreading-leaved earth moss).